We begin with the raw amino-acid sequence, 419 residues long: MKSATEQDSESDFYTAAAHLINCPGIETEQTLIEFLQYRESSCQSIKITKRKIVEVLARLGCIDAVPAIGKCLWSDDVYLVENSVWALQILQCQDQIFIDQMIDILRVDTTNQRISIQCLATLNISRSVDVIRPFQESSVPGIKGAAISGIAKLTRNFTRVPEISLNLLLPNQMDRHFAIQDLIDVDAIDQLNEIFAAPVSPVLKMRAVREMYGENSASVVDLNLLSSLDSLFSCDLSAINCVHEYDESPSSEFLVRDLYNTDFSRCYLALKYLSSRSASEIFPMLKESWVEEAHNDYGAHYCFICLFGSIFDWSAESKRWIFEVLLSSISNLRPQFQKSRAASILALAKLNPSMLCELIPEILSSRDSMPWDMRYSLIQSIDNYAELEIALKNKMIFQLSDNDIDQFVQARARMALAS.

Functionally, involved in the biosynthesis of bilin. In Synechococcus sp. (strain WH8020), this protein is Bilin biosynthesis protein CpeY (cpeY).